A 1648-amino-acid polypeptide reads, in one-letter code: Pleiotropic ABC efflux transporter of multiple drugs YBT1 (1648 aa).

Residues Asn28 to Ile48 form a helical membrane-spanning segment. Asn72 carries N-linked (GlcNAc...) asparagine glycosylation. 4 helical membrane-spanning segments follow: residues Val140 to Glu160, Pro175 to Asn195, Asn207 to Phe227, and Leu250 to Leu270. A glycan (N-linked (GlcNAc...) asparagine) is linked at Asn306. The next 2 helical transmembrane spans lie at Phe352–Val372 and Met392–Cys412. In terms of domain architecture, ABC transmembrane type-1 1 spans Cys361–Gln674. Residue Asn471 is glycosylated (N-linked (GlcNAc...) asparagine). The next 2 helical transmembrane spans lie at Ile501–Ser521 and Ile523–Ile543. Asn573 carries an N-linked (GlcNAc...) asparagine glycan. 2 helical membrane passes run Val612–Phe632 and Leu643–Leu662. Positions Leu706–Lys947 constitute an ABC transporter 1 domain. Asn710 carries N-linked (GlcNAc...) asparagine glycosylation. Gly741–Thr748 lines the ATP pocket. Asn784 and Asn798 each carry an N-linked (GlcNAc...) asparagine glycan. Residues Met1012–Leu1032 traverse the membrane as a helical segment. In terms of domain architecture, ABC transmembrane type-1 2 spans Leu1032–Met1333. An N-linked (GlcNAc...) asparagine glycan is attached at Asn1042. A run of 3 helical transmembrane segments spans residues Ile1089–Ile1109, Ile1168–Ile1188, and Ala1191–Leu1211. Residue Asn1255 is glycosylated (N-linked (GlcNAc...) asparagine). 2 helical membrane passes run Leu1282 to Ile1302 and Gly1305 to Val1325. The region spanning Val1372 to Glu1622 is the ABC transporter 2 domain. The N-linked (GlcNAc...) asparagine glycan is linked to Asn1376. Gly1406–Ser1413 contributes to the ATP binding site. N-linked (GlcNAc...) asparagine glycans are attached at residues Asn1503, Asn1524, and Asn1573.

This sequence belongs to the ABC transporter superfamily. ABCC family. Conjugate transporter (TC 3.A.1.208) subfamily.

It localises to the membrane. Pleiotropic ABC efflux transporter that might be involved in the resistance to azoles such as fluconazole. The protein is Pleiotropic ABC efflux transporter of multiple drugs YBT1 of Candida glabrata (strain ATCC 2001 / BCRC 20586 / JCM 3761 / NBRC 0622 / NRRL Y-65 / CBS 138) (Yeast).